Here is a 269-residue protein sequence, read N- to C-terminus: Shikimate dehydrogenase (NADP(+)) (269 aa).

Residues 17–19 and threonine 64 each bind shikimate; that span reads SKS. Residue lysine 68 is the Proton acceptor of the active site. Glutamate 80 contacts NADP(+). Positions 89 and 105 each coordinate shikimate. NADP(+) is bound by residues 130 to 134, 154 to 159, and methionine 213; these read GAGGA and NRTRAK. Tyrosine 215 is a shikimate binding site. Glycine 237 contacts NADP(+).

This sequence belongs to the shikimate dehydrogenase family. Homodimer.

The catalysed reaction is shikimate + NADP(+) = 3-dehydroshikimate + NADPH + H(+). It participates in metabolic intermediate biosynthesis; chorismate biosynthesis; chorismate from D-erythrose 4-phosphate and phosphoenolpyruvate: step 4/7. Its function is as follows. Involved in the biosynthesis of the chorismate, which leads to the biosynthesis of aromatic amino acids. Catalyzes the reversible NADPH linked reduction of 3-dehydroshikimate (DHSA) to yield shikimate (SA). The protein is Shikimate dehydrogenase (NADP(+)) of Neisseria meningitidis serogroup C / serotype 2a (strain ATCC 700532 / DSM 15464 / FAM18).